The sequence spans 1132 residues: Tyrosine-protein kinase JAK2 (1132 aa).

The interval 1–239 (MGMACLTMTE…RYRFRRFIQQ (239 aa)) is interaction with cytokine/interferon/growth hormone receptors. The 344-residue stretch at 37–380 (PVLLVYLYHS…GYYRLTADAH (344 aa)) folds into the FERM domain. Y119 is subject to Phosphotyrosine; by autocatalysis. Residues Y372 and Y373 each carry the phosphotyrosine modification. An SH2; atypical domain is found at 401–482 (HGPISMDFAI…SLKDLLNCYQ (82 aa)). S523 bears the Phosphoserine mark. The 265-residue stretch at 545–809 (LIFNESLGQG…AIIRDLNSLF (265 aa)) folds into the Protein kinase 1 domain. A phosphotyrosine mark is found at Y570 and Y813. The Protein kinase 2 domain maps to 849–1126 (LKFLQQLGKG…RDLALRVDQI (278 aa)). Residue 855–863 (LGKGNFGSV) coordinates ATP. Y868 carries the post-translational modification Phosphotyrosine; by autocatalysis. K882 serves as a coordination point for ATP. Residues Y966 and Y972 each carry the phosphotyrosine; by autocatalysis modification. D976 (proton acceptor) is an active-site residue. Phosphotyrosine; by autocatalysis is present on residues Y1007 and Y1008.

Belongs to the protein kinase superfamily. Tyr protein kinase family. JAK subfamily. In terms of assembly, interacts with IL23R, SKB1 and STAM2. Interacts with EPOR. Interacts with LYN. Interacts with SIRPA. Interacts with SH2B1. Interacts with TEC. Interacts with IFNGR2 (via intracellular domain). Interacts with LEPR (Isoform B). Interacts with HSP90AB1; promotes functional activation in a heat shock-dependent manner. Interacts with STRA6. Interacts with RHEX; this interaction occurs in a erythropoietin (EPO)-dependent manner. Interacts with ASB2; the interaction targets JAK2 for Notch-induced proteasomal degradation. Mg(2+) serves as cofactor. In terms of processing, autophosphorylated, leading to regulate its activity. Leptin promotes phosphorylation on tyrosine residues, including phosphorylation on Tyr-813. Autophosphorylation on Tyr-119 in response to EPO down-regulates its kinase activity. Autophosphorylation on Tyr-868, Tyr-966 and Tyr-972 in response to growth hormone (GH) are required for maximal kinase activity. Also phosphorylated by TEC. Phosphorylated on tyrosine residues in response to interferon gamma signaling. Phosphorylated on tyrosine residues in response to a signaling cascade that is activated by increased cellular retinol. Post-translationally, undergoes Notch-induced ubiquitination and subsequent proteasomal degradation which is mediated by ASB1 or ASB2, the substrate-recognition components of probable ECS E3 ubiquitin-protein ligase complexes.

The protein resides in the endomembrane system. Its subcellular location is the cytoplasm. The protein localises to the nucleus. The catalysed reaction is L-tyrosyl-[protein] + ATP = O-phospho-L-tyrosyl-[protein] + ADP + H(+). Its activity is regulated as follows. Regulated by autophosphorylation, can both activate or decrease activity. Heme regulates its activity by enhancing the phosphorylation on Tyr-1007 and Tyr-1008. Its function is as follows. Non-receptor tyrosine kinase involved in various processes such as cell growth, development, differentiation or histone modifications. Mediates essential signaling events in both innate and adaptive immunity. In the cytoplasm, plays a pivotal role in signal transduction via its association with type I receptors such as growth hormone (GHR), prolactin (PRLR), leptin (LEPR), erythropoietin (EPOR), thrombopoietin (THPO); or type II receptors including IFN-alpha, IFN-beta, IFN-gamma and multiple interleukins. Following ligand-binding to cell surface receptors, phosphorylates specific tyrosine residues on the cytoplasmic tails of the receptor, creating docking sites for STATs proteins. Subsequently, phosphorylates the STATs proteins once they are recruited to the receptor. Phosphorylated STATs then form homodimer or heterodimers and translocate to the nucleus to activate gene transcription. For example, cell stimulation with erythropoietin (EPO) during erythropoiesis leads to JAK2 autophosphorylation, activation, and its association with erythropoietin receptor (EPOR) that becomes phosphorylated in its cytoplasmic domain. Then, STAT5 (STAT5A or STAT5B) is recruited, phosphorylated and activated by JAK2. Once activated, dimerized STAT5 translocates into the nucleus and promotes the transcription of several essential genes involved in the modulation of erythropoiesis. Part of a signaling cascade that is activated by increased cellular retinol and that leads to the activation of STAT5 (STAT5A or STAT5B). In addition, JAK2 mediates angiotensin-2-induced ARHGEF1 phosphorylation. Plays a role in cell cycle by phosphorylating CDKN1B. Cooperates with TEC through reciprocal phosphorylation to mediate cytokine-driven activation of FOS transcription. In the nucleus, plays a key role in chromatin by specifically mediating phosphorylation of 'Tyr-41' of histone H3 (H3Y41ph), a specific tag that promotes exclusion of CBX5 (HP1 alpha) from chromatin. Up-regulates the potassium voltage-gated channel activity of KCNA3. In Pongo abelii (Sumatran orangutan), this protein is Tyrosine-protein kinase JAK2.